Here is a 341-residue protein sequence, read N- to C-terminus: Glycerol-3-phosphate dehydrogenase [NAD(P)+] (341 aa).

NADPH is bound by residues Ser17, Trp18, Arg37, and Lys112. Sn-glycerol 3-phosphate is bound by residues Lys112 and Gly140. Ala144 provides a ligand contact to NADPH. Sn-glycerol 3-phosphate-binding residues include Lys195, Asp248, Ser258, Arg259, and Asn260. The active-site Proton acceptor is Lys195. Arg259 lines the NADPH pocket. The NADPH site is built by Val283 and Glu285.

It belongs to the NAD-dependent glycerol-3-phosphate dehydrogenase family.

The protein resides in the cytoplasm. The enzyme catalyses sn-glycerol 3-phosphate + NAD(+) = dihydroxyacetone phosphate + NADH + H(+). It catalyses the reaction sn-glycerol 3-phosphate + NADP(+) = dihydroxyacetone phosphate + NADPH + H(+). The protein operates within membrane lipid metabolism; glycerophospholipid metabolism. In terms of biological role, catalyzes the reduction of the glycolytic intermediate dihydroxyacetone phosphate (DHAP) to sn-glycerol 3-phosphate (G3P), the key precursor for phospholipid synthesis. The polypeptide is Glycerol-3-phosphate dehydrogenase [NAD(P)+] (Mycobacterium avium (strain 104)).